Reading from the N-terminus, the 530-residue chain is 4-alpha-glucanotransferase (530 aa).

It belongs to the disproportionating enzyme family.

It localises to the cytoplasm. The catalysed reaction is Transfers a segment of a (1-&gt;4)-alpha-D-glucan to a new position in an acceptor, which may be glucose or a (1-&gt;4)-alpha-D-glucan.. The polypeptide is 4-alpha-glucanotransferase (malQ) (Chlamydia caviae (strain ATCC VR-813 / DSM 19441 / 03DC25 / GPIC) (Chlamydophila caviae)).